Here is a 509-residue protein sequence, read N- to C-terminus: Putative ATP-dependent RNA helicase QP509L (509 aa).

A Helicase ATP-binding domain is found at 110-262 (KKLLSPYGRF…KIILHHLGQP (153 aa)). Residue 123 to 130 (LNTGLGKT) participates in ATP binding. The DEAH box signature appears at 215-218 (DEAH).

It belongs to the DEAD box helicase family. DEAH subfamily.

The enzyme catalyses ATP + H2O = ADP + phosphate + H(+). This is Putative ATP-dependent RNA helicase QP509L from Ornithodoros (relapsing fever ticks).